The sequence spans 114 residues: Chaperone protein YscY (114 aa).

As to quaternary structure, binds to YscX.

It localises to the cytoplasm. In terms of biological role, required for Yop secretion. Functions probably as a chaperone which stabilizes YscX within the cell, before its secretion. In Yersinia enterocolitica, this protein is Chaperone protein YscY (yscY).